A 528-amino-acid polypeptide reads, in one-letter code: Potassium voltage-gated channel subfamily A member 3 (528 aa).

Positions 1 to 32 are disordered; sequence MTVVPGDHLLEPEAAGGGGGDPPQGGCGSGGG. Residues 1 to 187 lie on the Cytoplasmic side of the membrane; that stretch reads MTVVPGDHLL…EYPESSGPAR (187 aa). Over residues 15–32 the composition is skewed to gly residues; it reads AGGGGGDPPQGGCGSGGG. Residues 188–206 form a helical membrane-spanning segment; it reads GIAIVSVLVILISIVIFCL. Residues 207 to 247 lie on the Extracellular side of the membrane; sequence ETLPEFRDEKDYPASPSQDVFEAANNSTSGAPSGASSFSDP. Asn-232 carries N-linked (GlcNAc...) asparagine glycosylation. The helical transmembrane segment at 248-269 threads the bilayer; sequence FFVVETLCIIWFSFELLVRFFA. Cys-270 carries the S-palmitoyl cysteine lipid modification. At 270–280 the chain is on the cytoplasmic side; it reads CPSKATFSRNI. The helical transmembrane segment at 281-301 threads the bilayer; the sequence is MNLIDIVAIIPYFITLGTELA. At 302–315 the chain is on the extracellular side; that stretch reads ERQGNGQQAMSLAI. Residues 316 to 334 form a helical; Voltage-sensor membrane-spanning segment; that stretch reads LRVIRLVRVFRIFKLSRHS. Over 335 to 350 the chain is Cytoplasmic; it reads KGLQILGQTLKASMRE. Residues 351-370 traverse the membrane as a helical segment; the sequence is LGLLIFFLFIGVILFSSAVY. The Extracellular segment spans residues 371-411; the sequence is FAEADDPSSGFNSIPDAFWWAVVTMTTVGYGDMHPVTIGGK. The Selectivity filter motif lies at 397–402; it reads TVGYGD. Residues 412-434 form a helical membrane-spanning segment; sequence IVGSLCAIAGVLTIALPVPVIVS. Residues 435–528 are Cytoplasmic-facing; sequence NFNYFYHRET…VNIKKIFTDV (94 aa). The interaction with KCNE4 stretch occupies residues 435–528; sequence NFNYFYHRET…VNIKKIFTDV (94 aa). At Tyr-452 the chain carries Phosphotyrosine. A Phosphoserine; by PKA modification is found at Ser-473. Residues 526–528 carry the PDZ-binding motif; it reads TDV.

Belongs to the potassium channel family. A (Shaker) (TC 1.A.1.2) subfamily. Kv1.3/KCNA3 sub-subfamily. Homotetramer. Forms heterooligomers with KCNE4 which inhibits KCNA3 activity by impairing localization to the cell membrane. The stoichiometry of KCNA3 and KCNE4 in the heterooligomers are 4:1, 4:2, 4:3 or 4:4 respectively. Increasing the number of KCNE4 subunits steadily slows the activation KCNA3 and decreases its abundance at the cell membrane. However, a single subunit of KCNE4 is sufficient for the cooperative enhancement of the inactivating function of the channel. Interacts with SEC24D; this interaction is reduced in the presence of KCNE4. Interacts with DLG1, DLG2 and DLG4 via their PDZ domains. In terms of processing, N-glycosylation promotes the cell surface expression. Post-translationally, phosphorylation on Tyr-452 inhibits its channel activity.

The protein localises to the cell membrane. It catalyses the reaction K(+)(in) = K(+)(out). Its activity is regulated as follows. Activity is up-regulated by JAK2. In terms of biological role, mediates the voltage-dependent potassium ion permeability of excitable membranes. Assuming opened or closed conformations in response to the voltage difference across the membrane, the protein forms a potassium-selective channel through which potassium ions may pass in accordance with their electrochemical gradient. This is Potassium voltage-gated channel subfamily A member 3 (Kcna3) from Mus musculus (Mouse).